The following is a 409-amino-acid chain: Cdc42 effector protein 1 (409 aa).

Residues 1–29 are disordered; that stretch reads MPGPQGGTGAPTMSLGKLSPVGWVSSSHG. Ser-19 and Ser-27 each carry phosphoserine. Thr-34 is modified (phosphothreonine). The 15-residue stretch at 38 to 52 folds into the CRIB domain; it reads ISPPLGDFRHTMHVG. Ser-39 carries the post-translational modification Phosphoserine. At Arg-53 the chain carries Omega-N-methylarginine. Residues Ser-65, Ser-77, Ser-101, Ser-113, Ser-121, and Ser-139 each carry the phosphoserine modification. Positions 167–189 are enriched in basic and acidic residues; that stretch reads PRVEKHSNRDRDRDPDHSQDREQ. The segment at 167–203 is disordered; that stretch reads PRVEKHSNRDRDRDPDHSQDREQSSFPSEPTPNPELR. Phosphoserine occurs at positions 191, 205, 207, and 210. A run of 3 repeats spans residues 235 to 241, 242 to 248, and 255 to 261. Positions 235 to 284 are 3 X 7 AA tandem repeats of [PT]-[AT]-A-[ENT]-[PT]-[PTS]-[AG]; that stretch reads PAAETPVPTANPPAPAANPAPTAKPPAHAITTLDAVTSLPASAVTSLPAP. 2 disordered regions span residues 237 to 260 and 282 to 329; these read AETPVPTANPPAPAANPAPTAKPP and PAPA…FDRH. A compositionally biased stretch (pro residues) spans 243–258; the sequence is TANPPAPAANPAPTAK. Over residues 282-291 the composition is skewed to low complexity; sequence PAPAAASSPS. Phosphoserine occurs at positions 312, 332, 368, and 371.

Belongs to the BORG/CEP family. Interacts with RHOQ and CDC42, in a GTP-dependent manner.

The protein resides in the endomembrane system. It is found in the cytoplasm. Its subcellular location is the cytoskeleton. Functionally, probably involved in the organization of the actin cytoskeleton. Induced membrane extensions in fibroblasts. The chain is Cdc42 effector protein 1 (Cdc42ep1) from Mus musculus (Mouse).